The primary structure comprises 690 residues: Probable serine/threonine-protein kinase drkB (690 aa).

Positions 1–24 (MKVQIVFFSITVFIFVLFLLSVES) are cleaved as a signal peptide. Residues 51-110 (DSKSSEHTTSSSSSSNSKNKGDSSSSSSNSGSSSNSIISGDSNSKDAPTTSSDSLSPATP) form a disordered region. Over residues 57–96 (HTTSSSSSSNSKNKGDSSSSSSNSGSSSNSIISGDSNSKD) the composition is skewed to low complexity. Residues 97 to 107 (APTTSSDSLSP) are compositionally biased toward polar residues. N-linked (GlcNAc...) asparagine glycans are attached at residues N134, N180, N220, and N250. The disordered stretch occupies residues 287 to 335 (TITPTPTITPTPTITPTVTPTATPSTTPSTTPTTTPSTPTPTPTKSPYS). A compositionally biased stretch (low complexity) spans 296 to 323 (PTPTITPTVTPTATPSTTPSTTPTTTPS). Residues 346 to 366 (IIIASSITGGLLISIFSFVFI) traverse the membrane as a helical segment. Residues 391–644 (IKIGVRIGKG…EQCLEILESI (254 aa)) enclose the Protein kinase domain. ATP contacts are provided by residues 397 to 405 (IGKGNFGEV) and K418. Catalysis depends on D514, which acts as the Proton acceptor. Residues 649-690 (FDDIPVNNNNNNNSNNNENNNENNNNSDNNNNDINYSNRVIN) form a disordered region. The span at 655-681 (NNNNNNNSNNNENNNENNNNSDNNNND) shows a compositional bias: low complexity.

The protein belongs to the protein kinase superfamily. TKL Ser/Thr protein kinase family.

It is found in the membrane. The catalysed reaction is L-seryl-[protein] + ATP = O-phospho-L-seryl-[protein] + ADP + H(+). It catalyses the reaction L-threonyl-[protein] + ATP = O-phospho-L-threonyl-[protein] + ADP + H(+). This Dictyostelium discoideum (Social amoeba) protein is Probable serine/threonine-protein kinase drkB (drkB).